Reading from the N-terminus, the 533-residue chain is Drimenyl diphosphate synthase (533 aa).

(2E,6E)-farnesyl diphosphate-binding residues include arginine 132, lysine 133, glutamine 163, and tryptophan 165. Residue glutamate 169 coordinates Mg(2+). 5 PFTB repeats span residues 274-316 (VTPM…RRAA), 324-366 (VAEA…AHDP), 372-415 (VDEA…AAHG), 425-466 (AERA…ARGP), and 474-517 (LDRA…FVLL). Residue aspartate 303 is the Proton donor of the active site. A (2E,6E)-farnesyl diphosphate-binding site is contributed by arginine 501.

It belongs to the terpene cyclase/mutase family. The cofactor is Mg(2+). Requires Ni(2+) as cofactor. Co(2+) is required as a cofactor.

It catalyses the reaction (2E,6E)-farnesyl diphosphate = (5S,9S,10S)-drim-7-en-11-yl diphosphate. Catalyzes the cyclization of farnesyl diphosphate (FPP) to drimenyl diphosphate. Cannot use geranylgeranyl diphosphate (GGPP) as substrate. This is Drimenyl diphosphate synthase from Streptomyces showdoensis.